The following is a 374-amino-acid chain: Large ribosomal subunit protein bL27m (374 aa).

A mitochondrion-targeting transit peptide spans 1-41; the sequence is MLRLSGVKSAVRARAAAGAAFSVSLSGPQAVSLLALPLVRH.

This sequence belongs to the bacterial ribosomal protein bL27 family.

The protein localises to the mitochondrion. Its function is as follows. Component of the large subunit of mitochondrial ribosome. The sequence is that of Large ribosomal subunit protein bL27m (MRPL2) from Yarrowia lipolytica (strain CLIB 122 / E 150) (Yeast).